Reading from the N-terminus, the 69-residue chain is Sec-independent protein translocase protein TatA (69 aa).

A helical membrane pass occupies residues 1-21; sequence MGSLSIWHWLIVLAIALLLFG. Residues 41–69 are disordered; that stretch reads KGMNDDEETPPPAQSTTSRTVEHKADESK. A compositionally biased stretch (basic and acidic residues) spans 60–69; that stretch reads TVEHKADESK.

It belongs to the TatA/E family. In terms of assembly, the Tat system comprises two distinct complexes: a TatABC complex, containing multiple copies of TatA, TatB and TatC subunits, and a separate TatA complex, containing only TatA subunits. Substrates initially bind to the TatABC complex, which probably triggers association of the separate TatA complex to form the active translocon.

Its subcellular location is the cell inner membrane. Part of the twin-arginine translocation (Tat) system that transports large folded proteins containing a characteristic twin-arginine motif in their signal peptide across membranes. TatA could form the protein-conducting channel of the Tat system. The sequence is that of Sec-independent protein translocase protein TatA from Rhizobium rhizogenes (strain K84 / ATCC BAA-868) (Agrobacterium radiobacter).